We begin with the raw amino-acid sequence, 302 residues long: Proline dehydrogenase 1 (302 aa).

A substrate-binding site is contributed by Lys95. The active site involves Asp129. FAD is bound by residues Met130 and Gln158. Arg179 is a catalytic residue. FAD-binding positions include 182 to 184 (KGA) and 221 to 222 (TH). Substrate is bound at residue 283–284 (RR).

This sequence belongs to the proline oxidase family. Requires FAD as cofactor.

The enzyme catalyses L-proline + a quinone = (S)-1-pyrroline-5-carboxylate + a quinol + H(+). It participates in amino-acid degradation; L-proline degradation into L-glutamate; L-glutamate from L-proline: step 1/2. In terms of biological role, converts proline to delta-1-pyrroline-5-carboxylate. In Bacillus subtilis subsp. natto, this protein is Proline dehydrogenase 1 (fadM).